The primary structure comprises 451 residues: UDP-N-acetyl-alpha-D-muramoyl-L-alanyl-L-glutamate epimerase (451 aa).

The protein belongs to the MurL family.

It catalyses the reaction UDP-N-acetyl-alpha-D-muramoyl-L-alanyl-L-glutamate + ATP + H2O = UDP-N-acetyl-alpha-D-muramoyl-L-alanyl-D-glutamate + AMP + diphosphate + H(+). It functions in the pathway cell wall biogenesis; peptidoglycan biosynthesis. Its function is as follows. Cell wall formation. Catalyzes epimerization of the terminal L-glutamate in UDP-N-acetyl-alpha-D-muramoyl-L-alanyl-L-glutamate. The sequence is that of UDP-N-acetyl-alpha-D-muramoyl-L-alanyl-L-glutamate epimerase from Xanthomonas oryzae pv. oryzae (strain MAFF 311018).